Consider the following 297-residue polypeptide: Phosphoribosylaminoimidazole-succinocarboxamide synthase (297 aa).

Belongs to the SAICAR synthetase family.

It catalyses the reaction 5-amino-1-(5-phospho-D-ribosyl)imidazole-4-carboxylate + L-aspartate + ATP = (2S)-2-[5-amino-1-(5-phospho-beta-D-ribosyl)imidazole-4-carboxamido]succinate + ADP + phosphate + 2 H(+). The protein operates within purine metabolism; IMP biosynthesis via de novo pathway; 5-amino-1-(5-phospho-D-ribosyl)imidazole-4-carboxamide from 5-amino-1-(5-phospho-D-ribosyl)imidazole-4-carboxylate: step 1/2. The polypeptide is Phosphoribosylaminoimidazole-succinocarboxamide synthase (Mycobacterium sp. (strain KMS)).